A 153-amino-acid chain; its full sequence is Peptide deformylase (153 aa).

Residues Cys87 and His129 each contribute to the Fe cation site. Glu130 is a catalytic residue. Position 133 (His133) interacts with Fe cation.

This sequence belongs to the polypeptide deformylase family. It depends on Fe(2+) as a cofactor.

The enzyme catalyses N-terminal N-formyl-L-methionyl-[peptide] + H2O = N-terminal L-methionyl-[peptide] + formate. Its function is as follows. Removes the formyl group from the N-terminal Met of newly synthesized proteins. Requires at least a dipeptide for an efficient rate of reaction. N-terminal L-methionine is a prerequisite for activity but the enzyme has broad specificity at other positions. This Dictyoglomus thermophilum (strain ATCC 35947 / DSM 3960 / H-6-12) protein is Peptide deformylase.